The chain runs to 409 residues: Pentatricopeptide repeat-containing protein At1g31790 (409 aa).

PPR repeat units lie at residues 87-121 (NEDIYSCLAKESARENDQRGAHELQVHIMKSSIRP), 122-152 (TITFINRLLLMHVSCGRLDITRQMFDRMPHR), 153-187 (DFHSWAIVFLGCIEMGDYEDAAFLFVSMLKHSQKG), 192-226 (PSWILGCVLKACAMIRDFELGKQVHALCHKLGFID), 229-259 (DSYLSGSLIRFYGEFRCLEDANLVLHQLSNA), 260-294 (NTVAWAAKVTNDYREGEFQEVIRDFIEMGNHGIKK), 295-330 (NVSVFSNVLKACSWVSDGGRSGQQVHANAIKLGFES), 331-361 (DCLIRCRLIEMYGKYGKVKDAEKVFKSSKDE), and 363-397 (SVSCWNAMVASYMQNGIYIEAIKLLYQMKATGIKA).

This sequence belongs to the PPR family. PCMP-A subfamily.

This Arabidopsis thaliana (Mouse-ear cress) protein is Pentatricopeptide repeat-containing protein At1g31790 (PCMP-A1).